We begin with the raw amino-acid sequence, 1131 residues long: Replication factor C subunit 1 (1131 aa).

Disordered regions lie at residues 14 to 87 (KKPV…KSEK), 92 to 111 (YKPG…ETDE), 120 to 201 (AASK…NDEA), and 225 to 378 (ARTL…NYQA). Over residues 38 to 54 (GVKEAKVNNSGKEDASK) the composition is skewed to basic and acidic residues. Residue Lys-49 forms a Glycyl lysine isopeptide (Lys-Gly) (interchain with G-Cter in SUMO2) linkage. Tyr-66 bears the Phosphotyrosine mark. Residues Ser-68, Ser-70, Ser-72, and Ser-107 each carry the phosphoserine modification. At Thr-109 the chain carries Phosphothreonine. A compositionally biased stretch (polar residues) spans 127-138 (NGVSTNSYLGTS). Ser-155 bears the Phosphoserine mark. Phosphothreonine is present on residues Thr-160 and Thr-162. Phosphoserine is present on residues Ser-163, Ser-172, Ser-189, Ser-244, Ser-250, Ser-253, Ser-281, and Ser-309. Residues 184 to 201 (KRKESSQNTEDSRLNDEA) show a composition bias toward basic and acidic residues. The segment covering 308 to 319 (SSPKASAKLALM) has biased composition (low complexity). Basic and acidic residues-rich tracts occupy residues 334-350 (AARR…EKTT) and 359-373 (TKRE…EKKR). Residues 354–528 (TKVSPTKRES…KKESESKKCK (175 aa)) form an interferon-stimulated-response-element binding region region. Ser-365 carries the post-translational modification Phosphoserine. A BRCT domain is found at 399–489 (GAENCLEGLT…PGKRSKYEMA (91 aa)). Residues 491 to 525 (EAEMKKEKSKLERTPQKNDQGKRKISPAKKESESK) are disordered. Ser-535 is modified (phosphoserine). 635–642 (GPPGVGKT) contacts ATP. The segment at 1073–1131 (PALDSEYSEEFQEDDTQSEKEQDAVETDAMIKKKTRSSKPSKSEREKESKKGKGKNWKK) is disordered. A compositionally biased stretch (acidic residues) spans 1078–1088 (EYSEEFQEDDT). Ser-1090 bears the Phosphoserine mark. Residues 1104–1108 (KKKTR) carry the Nuclear localization signal motif. The span at 1113–1123 (SKSEREKESKK) shows a compositional bias: basic and acidic residues.

This sequence belongs to the activator 1 large subunit family. As to quaternary structure, large subunit of the RFC complex, an heteropentameric complex consisting of RFC1 and four small subunits RFC2, RFC3, RFC4 and RFC5; the RFC complex interacts with PCNA and the interaction involves RFC1.

Its subcellular location is the nucleus. Functionally, subunit of the replication factor C (RFC) complex which acts during elongation of primed DNA templates by DNA polymerases delta and epsilon, and is necessary for ATP-dependent loading of proliferating cell nuclear antigen (PCNA) onto primed DNA. This subunit binds to the primer-template junction. Binds the PO-B transcription element as well as other GA rich DNA sequences. Can bind single- or double-stranded DNA. This chain is Replication factor C subunit 1 (Rfc1), found in Mus musculus (Mouse).